Consider the following 143-residue polypeptide: Transcriptional regulator MraZ (143 aa).

SpoVT-AbrB domains lie at 5 to 47 (SHTP…PMAE) and 76 to 119 (AADD…DAQR).

Belongs to the MraZ family. In terms of assembly, forms oligomers.

Its subcellular location is the cytoplasm. It localises to the nucleoid. This chain is Transcriptional regulator MraZ, found in Frankia alni (strain DSM 45986 / CECT 9034 / ACN14a).